Here is a 356-residue protein sequence, read N- to C-terminus: tRNA N6-adenosine threonylcarbamoyltransferase (356 aa).

Residues H110 and H114 each coordinate Fe cation. Residues 132–136 (LVSGG), D165, G178, D182, and N288 contribute to the substrate site. D316 contacts Fe cation.

Belongs to the KAE1 / TsaD family. Fe(2+) serves as cofactor.

The protein resides in the cytoplasm. The catalysed reaction is L-threonylcarbamoyladenylate + adenosine(37) in tRNA = N(6)-L-threonylcarbamoyladenosine(37) in tRNA + AMP + H(+). In terms of biological role, required for the formation of a threonylcarbamoyl group on adenosine at position 37 (t(6)A37) in tRNAs that read codons beginning with adenine. Is involved in the transfer of the threonylcarbamoyl moiety of threonylcarbamoyl-AMP (TC-AMP) to the N6 group of A37, together with TsaE and TsaB. TsaD likely plays a direct catalytic role in this reaction. The polypeptide is tRNA N6-adenosine threonylcarbamoyltransferase (Maridesulfovibrio salexigens (strain ATCC 14822 / DSM 2638 / NCIMB 8403 / VKM B-1763) (Desulfovibrio salexigens)).